A 311-amino-acid chain; its full sequence is Putative S-adenosyl-L-methionine-dependent methyltransferase MSMEG_0095/MSMEI_0092 (311 aa).

S-adenosyl-L-methionine-binding positions include Asp134 and 163–164 (DL).

The protein belongs to the UPF0677 family.

Its function is as follows. Exhibits S-adenosyl-L-methionine-dependent methyltransferase activity. The sequence is that of Putative S-adenosyl-L-methionine-dependent methyltransferase MSMEG_0095/MSMEI_0092 from Mycolicibacterium smegmatis (strain ATCC 700084 / mc(2)155) (Mycobacterium smegmatis).